The following is an 89-amino-acid chain: Small ribosomal subunit protein uS15 (89 aa).

The protein belongs to the universal ribosomal protein uS15 family. As to quaternary structure, part of the 30S ribosomal subunit. Forms a bridge to the 50S subunit in the 70S ribosome, contacting the 23S rRNA.

In terms of biological role, one of the primary rRNA binding proteins, it binds directly to 16S rRNA where it helps nucleate assembly of the platform of the 30S subunit by binding and bridging several RNA helices of the 16S rRNA. Its function is as follows. Forms an intersubunit bridge (bridge B4) with the 23S rRNA of the 50S subunit in the ribosome. The protein is Small ribosomal subunit protein uS15 of Gloeobacter violaceus (strain ATCC 29082 / PCC 7421).